We begin with the raw amino-acid sequence, 286 residues long: Energy-coupling factor transporter ATP-binding protein EcfA2 (286 aa).

An ABC transporter domain is found at I3–G246. G40–S47 contributes to the ATP binding site.

Belongs to the ABC transporter superfamily. Energy-coupling factor EcfA family. Forms a stable energy-coupling factor (ECF) transporter complex composed of 2 membrane-embedded substrate-binding proteins (S component), 2 ATP-binding proteins (A component) and 2 transmembrane proteins (T component).

The protein localises to the cell membrane. Its function is as follows. ATP-binding (A) component of a common energy-coupling factor (ECF) ABC-transporter complex. Unlike classic ABC transporters this ECF transporter provides the energy necessary to transport a number of different substrates. This Staphylococcus aureus (strain MRSA252) protein is Energy-coupling factor transporter ATP-binding protein EcfA2.